A 187-amino-acid chain; its full sequence is Elongation factor P (187 aa).

Position 33 is an N6-(3,6-diaminohexanoyl)-5-hydroxylysine (Lys33).

The protein belongs to the elongation factor P family. May be beta-lysylated on the epsilon-amino group of Lys-33 by the combined action of EpmA and EpmB, and then hydroxylated on the C5 position of the same residue by EpmC (if this protein is present). Lysylation is critical for the stimulatory effect of EF-P on peptide-bond formation. The lysylation moiety may extend toward the peptidyltransferase center and stabilize the terminal 3-CCA end of the tRNA. Hydroxylation of the C5 position on Lys-33 may allow additional potential stabilizing hydrogen-bond interactions with the P-tRNA.

It is found in the cytoplasm. It participates in protein biosynthesis; polypeptide chain elongation. Involved in peptide bond synthesis. Alleviates ribosome stalling that occurs when 3 or more consecutive Pro residues or the sequence PPG is present in a protein, possibly by augmenting the peptidyl transferase activity of the ribosome. Modification of Lys-33 is required for alleviation. The chain is Elongation factor P from Blochmanniella floridana.